The following is a 310-amino-acid chain: Homoserine kinase (310 aa).

91–101 (PIGSGLGSSAC) is an ATP binding site.

This sequence belongs to the GHMP kinase family. Homoserine kinase subfamily.

Its subcellular location is the cytoplasm. It catalyses the reaction L-homoserine + ATP = O-phospho-L-homoserine + ADP + H(+). It participates in amino-acid biosynthesis; L-threonine biosynthesis; L-threonine from L-aspartate: step 4/5. Its function is as follows. Catalyzes the ATP-dependent phosphorylation of L-homoserine to L-homoserine phosphate. This is Homoserine kinase from Escherichia coli O6:H1 (strain CFT073 / ATCC 700928 / UPEC).